The sequence spans 44 residues: Photosystem I reaction center subunit IX (44 aa).

A helical transmembrane segment spans residues 7–27 (YLSAAPVLSTIWFGALAGLLI).

The protein belongs to the PsaJ family.

The protein localises to the plastid. Its subcellular location is the chloroplast thylakoid membrane. Functionally, may help in the organization of the PsaE and PsaF subunits. In Pelargonium hortorum (Common geranium), this protein is Photosystem I reaction center subunit IX.